The chain runs to 504 residues: Deoxyguanosinetriphosphate triphosphohydrolase (504 aa).

One can recognise an HD domain in the interval 66–273; it reads RLTHSMEVQQ…MEAADDISYC (208 aa).

This sequence belongs to the dGTPase family. Type 1 subfamily. In terms of assembly, homotetramer. Mg(2+) is required as a cofactor.

The enzyme catalyses dGTP + H2O = 2'-deoxyguanosine + triphosphate + H(+). DGTPase preferentially hydrolyzes dGTP over the other canonical NTPs. The polypeptide is Deoxyguanosinetriphosphate triphosphohydrolase (Enterobacter sp. (strain 638)).